The sequence spans 571 residues: DExH-box ATP-dependent RNA helicase DExH16, mitochondrial (571 aa).

The transit peptide at 1-56 (MAYSVVRLRKVSALGISRVLQADKGSLWRFHFEPEFGDLLRLGVLTRNYRKNSGSP) directs the protein to the mitochondrion. Positions 83–212 (IARKKKRKVI…HLCGDPAVVP (130 aa)) constitute a Helicase ATP-binding domain. Residue 96 to 103 (GPTNSGKT) coordinates ATP. A DEIH box; degenerate motif is present at residues 176–179 (DEIQ). The Helicase C-terminal domain maps to 213–399 (LVEDILKVTG…GLFPTFDLLS (187 aa)).

This sequence belongs to the DExH box helicase family. As to quaternary structure, homodimer; in free form. Component of the mitochondrial degradosome (mtEXO) complex which is a heteropentamer containing 2 copies of SUPV3L1 and 3 copies of PNPT1. It depends on Mg(2+) as a cofactor. Mn(2+) serves as cofactor. Weakly expressed.

Its subcellular location is the nucleus. It is found in the mitochondrion matrix. It localises to the mitochondrion nucleoid. It catalyses the reaction ATP + H2O = ADP + phosphate + H(+). Activated by the presence of mitochondrial RNA. Major helicase player in mitochondrial RNA metabolism. Component of the mitochondrial degradosome (mtEXO) complex, that degrades 3' overhang double-stranded RNA with a 3'-to-5' directionality in an ATP-dependent manner. ATPase and ATP-dependent multisubstrate helicase, able to unwind double-stranded (ds) DNA and RNA, and RNA/DNA heteroduplexes in the 5'-to-3' direction. Plays a role in the RNA surveillance system in mitochondria; regulates the stability of mature mRNAs, the removal of aberrantly formed mRNAs and the rapid degradation of non coding processing intermediates. Required during pollen development. This is DExH-box ATP-dependent RNA helicase DExH16, mitochondrial from Arabidopsis thaliana (Mouse-ear cress).